The following is a 533-amino-acid chain: D-3-phosphoglycerate dehydrogenase (533 aa).

A2 bears the N-acetylalanine mark. S14 is subject to Phosphoserine. K21 is modified (N6-acetyllysine; alternate). K21 participates in a covalent cross-link: Glycyl lysine isopeptide (Lys-Gly) (interchain with G-Cter in SUMO1); alternate. A Glycyl lysine isopeptide (Lys-Gly) (interchain with G-Cter in SUMO2); alternate cross-link involves residue K21. K58 carries the N6-acetyllysine modification. NAD(+) contacts are provided by residues T78, 155–156 (RI), D175, T207, 234–236 (CAR), and D260. Phosphothreonine is present on T78. Residue R236 is part of the active site. E265 is a catalytic residue. H283 acts as the Proton donor in catalysis. Residue 283–286 (HLGA) coordinates NAD(+).

It belongs to the D-isomer specific 2-hydroxyacid dehydrogenase family. Homotetramer. In terms of tissue distribution, liver, kidney, brain, testis.

The enzyme catalyses (2R)-3-phosphoglycerate + NAD(+) = 3-phosphooxypyruvate + NADH + H(+). Its pathway is amino-acid biosynthesis; L-serine biosynthesis; L-serine from 3-phospho-D-glycerate: step 1/3. Catalyzes the reversible oxidation of 3-phospho-D-glycerate to 3-phosphonooxypyruvate, the first step of the phosphorylated L-serine biosynthesis pathway. Does not catalyze the reversible oxidation of 2-hydroxyglutarate to 2-oxoglutarate and the reversible oxidation of (S)-malate to oxaloacetate. The chain is D-3-phosphoglycerate dehydrogenase (Phgdh) from Rattus norvegicus (Rat).